The sequence spans 96 residues: Aspartyl/glutamyl-tRNA(Asn/Gln) amidotransferase subunit C (96 aa).

Belongs to the GatC family. In terms of assembly, heterotrimer of A, B and C subunits.

It catalyses the reaction L-glutamyl-tRNA(Gln) + L-glutamine + ATP + H2O = L-glutaminyl-tRNA(Gln) + L-glutamate + ADP + phosphate + H(+). It carries out the reaction L-aspartyl-tRNA(Asn) + L-glutamine + ATP + H2O = L-asparaginyl-tRNA(Asn) + L-glutamate + ADP + phosphate + 2 H(+). Functionally, allows the formation of correctly charged Asn-tRNA(Asn) or Gln-tRNA(Gln) through the transamidation of misacylated Asp-tRNA(Asn) or Glu-tRNA(Gln) in organisms which lack either or both of asparaginyl-tRNA or glutaminyl-tRNA synthetases. The reaction takes place in the presence of glutamine and ATP through an activated phospho-Asp-tRNA(Asn) or phospho-Glu-tRNA(Gln). The chain is Aspartyl/glutamyl-tRNA(Asn/Gln) amidotransferase subunit C from Bacillus licheniformis (strain ATCC 14580 / DSM 13 / JCM 2505 / CCUG 7422 / NBRC 12200 / NCIMB 9375 / NCTC 10341 / NRRL NRS-1264 / Gibson 46).